Consider the following 158-residue polypeptide: uncharacterized protein (158 aa).

2 helical membrane-spanning segments follow: residues Leu-10 to Phe-30 and Tyr-40 to Leu-60.

The protein resides in the membrane. This is an uncharacterized protein from Schizosaccharomyces pombe (strain 972 / ATCC 24843) (Fission yeast).